The chain runs to 106 residues: LLLVALAVAYAVPDPRGVIINLEAGEICLNSAQCKSECCHQESSLSLARCAAKASENSECSAWTLYGVYYKCPCERGLTCQVDKTLVGSIMNTNFGICFDAARSEE.

An N-terminal signal peptide occupies residues 1 to 11 (LLLVALAVAYA). A propeptide spans 12-16 (VPDPR) (enterostatin, activation peptide). 5 disulfide bridges follow: Cys28–Cys39, Cys34–Cys50, Cys38–Cys72, Cys60–Cys80, and Cys74–Cys98. Residue Trp63 participates in taurodeoxycholate binding.

This sequence belongs to the colipase family. In terms of assembly, forms a 1:1 stoichiometric complex with pancreatic lipase. Expressed by the pancreas.

The protein localises to the secreted. Functionally, colipase is a cofactor of pancreatic lipase. It allows the lipase to anchor itself to the lipid-water interface. Without colipase the enzyme is washed off by bile salts, which have an inhibitory effect on the lipase. Enterostatin has a biological activity as a satiety signal. This chain is Colipase A (CLPS1), found in Equus caballus (Horse).